Here is a 230-residue protein sequence, read N- to C-terminus: Large ribosomal subunit protein uL1 (230 aa).

The protein belongs to the universal ribosomal protein uL1 family. Part of the 50S ribosomal subunit.

In terms of biological role, binds directly to 23S rRNA. The L1 stalk is quite mobile in the ribosome, and is involved in E site tRNA release. Protein L1 is also a translational repressor protein, it controls the translation of the L11 operon by binding to its mRNA. The polypeptide is Large ribosomal subunit protein uL1 (Bifidobacterium longum (strain DJO10A)).